The following is a 564-amino-acid chain: MGFGGFNGDFNFRGASDHRPLGSDGFLPSLDTNPFLKNHKSVEALDLCKKLHKMGISCDMSIWTKPEEQFRVDPSEFGARTLHGSSGFDQNLTGASQIHDGFRNFSSVRLQNNNFHGVSPSPGEMRLLGRQDSFNLNGFEEMLALKNHRDFLLDQIHEPIKRPPFLRGNDALISSLMFEGNNRVSQTLAAMEASRGFYPEEDSSLLSPFHEKVSGKLGASYLEDTVLIGQGSYGKMSPKSNNDLVSMVEIYGSVNLMAKDQIGCRVLQKLVEEGTFHEAKVILLAIIDHVVELSMDPFGNYIVQKLFDVSDEEQRTLIVSVLTSNPRELIRICLNTYGTRVVQKMIETVKTKQQIALVKSGLKPGFLALVKDLNGNHVIQSCLQTLGPNDNEFVLEAATKYCAEIAIHRHGCCVLQCCISNSVGLQRERLVAEISRNSLHLSQDPFGNYVVQYLIDQQVSAVKLLVQFRMHYAELATQKFSSHVIEKCLRKYPESRAEIVRELLCVPNFEYLLQDPYANYVIQTALSVTKGPVRAKLVAKVYRYGKLHSSPYCKKIFSKTILKK.

In terms of domain architecture, PUM-HD spans 222–564; it reads LEDTVLIGQG…KIFSKTILKK (343 aa). Pumilio repeat units lie at residues 249–284, 285–320, 321–359, 361–396, 397–432, 433–469, 470–501, and 502–539; these read EIYG…VILL, AIID…LIVS, VLTS…ALVK, GLKP…FVLE, AATK…RLVA, EISR…VQFR, MHYA…EIVR, and ELLC…KLVA.

The protein resides in the cytoplasm. Functionally, sequence-specific RNA-binding protein that regulates translation and mRNA stability by binding the 3'-UTR of target mRNAs. The polypeptide is Pumilio homolog 9 (APUM9) (Arabidopsis thaliana (Mouse-ear cress)).